A 199-amino-acid chain; its full sequence is NAD(P)H dehydrogenase (quinone) (199 aa).

One can recognise a Flavodoxin-like domain in the interval 4–190 (ILVLYYSSWG…EGARFQGKRL (187 aa)). FMN-binding positions include 10 to 15 (SSWGHM) and 78 to 80 (TRY). Position 12 (Trp12) interacts with NAD(+). Trp98 provides a ligand contact to substrate. FMN-binding positions include 113 to 119 (STATQHG) and His134. Positions 155 to 175 (VRGGAPYGMTTTSDTDGSRMP) are disordered.

It belongs to the WrbA family. FMN serves as cofactor.

The catalysed reaction is a quinone + NADH + H(+) = a quinol + NAD(+). The enzyme catalyses a quinone + NADPH + H(+) = a quinol + NADP(+). In Chelativorans sp. (strain BNC1), this protein is NAD(P)H dehydrogenase (quinone).